Here is a 704-residue protein sequence, read N- to C-terminus: Fatty acid oxidation complex subunit alpha (704 aa).

Positions 1 to 190 (MSEQKAFSLK…KLGVVDACVP (190 aa)) are enoyl-CoA hydratase. A 3-hydroxyacyl-CoA dehydrogenase region spans residues 308–704 (TAVNKVGVLG…RAGEGRNFYD (397 aa)).

The protein in the N-terminal section; belongs to the enoyl-CoA hydratase/isomerase family. This sequence in the central section; belongs to the 3-hydroxyacyl-CoA dehydrogenase family. As to quaternary structure, heterotetramer of two alpha chains (FadJ) and two beta chains (FadI).

It is found in the cytoplasm. The enzyme catalyses a (3S)-3-hydroxyacyl-CoA = a (2E)-enoyl-CoA + H2O. The catalysed reaction is a 4-saturated-(3S)-3-hydroxyacyl-CoA = a (3E)-enoyl-CoA + H2O. It carries out the reaction a (3S)-3-hydroxyacyl-CoA + NAD(+) = a 3-oxoacyl-CoA + NADH + H(+). It catalyses the reaction (3S)-3-hydroxybutanoyl-CoA = (3R)-3-hydroxybutanoyl-CoA. The protein operates within lipid metabolism; fatty acid beta-oxidation. Functionally, catalyzes the formation of a hydroxyacyl-CoA by addition of water on enoyl-CoA. Also exhibits 3-hydroxyacyl-CoA epimerase and 3-hydroxyacyl-CoA dehydrogenase activities. This chain is Fatty acid oxidation complex subunit alpha, found in Vibrio campbellii (strain ATCC BAA-1116).